A 352-amino-acid chain; its full sequence is 3-isopropylmalate dehydrogenase (352 aa).

Position 76-89 (76-89 (GPKWENLPHEHKPE)) interacts with NAD(+). 4 residues coordinate substrate: arginine 96, arginine 106, arginine 134, and aspartate 219. The Mg(2+) site is built by aspartate 219, aspartate 243, and aspartate 247. 276–288 (GSAPDIAGQNKAN) is a binding site for NAD(+).

The protein belongs to the isocitrate and isopropylmalate dehydrogenases family. LeuB type 1 subfamily. As to quaternary structure, homodimer. Mg(2+) serves as cofactor. It depends on Mn(2+) as a cofactor.

Its subcellular location is the cytoplasm. The enzyme catalyses (2R,3S)-3-isopropylmalate + NAD(+) = 4-methyl-2-oxopentanoate + CO2 + NADH. It participates in amino-acid biosynthesis; L-leucine biosynthesis; L-leucine from 3-methyl-2-oxobutanoate: step 3/4. Functionally, catalyzes the oxidation of 3-carboxy-2-hydroxy-4-methylpentanoate (3-isopropylmalate) to 3-carboxy-4-methyl-2-oxopentanoate. The product decarboxylates to 4-methyl-2 oxopentanoate. In Chlorobium chlorochromatii (strain CaD3), this protein is 3-isopropylmalate dehydrogenase.